The primary structure comprises 131 residues: Global transcriptional regulator Spx (131 aa).

Positions 10–13 (CTSC) match the CXXC motif. A disulfide bridge links cysteine 10 with cysteine 13.

It belongs to the ArsC family. Spx subfamily. In terms of assembly, interacts with the C-terminal domain of the alpha subunit of the RNAP. A single Spx monomer interacts with RNAP to form the transcription activation complex. Interacts with the adapter protein SpxH/YjbH.

Its subcellular location is the cytoplasm. With respect to regulation, under non-stress conditions, Spx is degraded by ClpXP and, to a lesser extent, by ClpCP. Efficient dedradation by ClpXP requires the adapter protein SpxH/YjbH. Binding to SpxH/YjbH reduces the overall conformational flexibility of Spx and stabilizes the C-terminal ClpX recognition region of Spx. In addition, activity is modulated by the formation of a disulfide bound within the N-terminal Cys-X-X-Cys (CXXC) motif, which is required for the transcriptional activation of trxA and trxB, or for the activation of msrAB operon expression following paraquat oxidative stress. However, it seems that formation of the disulfide bound is not essential for induction of all Spx-controlled genes, as for example the case of BSH biosynthesis genes. Similarly, induction of the Spx regulon during cell wall stress is not accompanied by oxidation of the disulfide switch, but requires Spx stabilization by the anti-adapter protein SpxO/YirB. Global transcriptional regulator that plays a key role in stress response and exerts either positive or negative regulation of genes. Acts by interacting with the C-terminal domain of the alpha subunit of the RNA polymerase (RNAP). This interaction can enhance binding of RNAP to the promoter region of target genes and stimulate their transcription, or block interaction of RNAP with activator proteins and repress transcription. Exhibits no DNA-binding activity. In terms of biological role, induces the expression of a large number of genes in response to a variety of stress conditions, such as disulfide, heat and cell wall stress, while concurrently repressing transcription of genes involved in various developmental and growth-related pathways during periods of extreme stress. Functions in the oxidative stress response via induction of the transcription of thioredoxin (trxA) and thioredoxin reductase (trxB) during thiol-specific oxidative (disulfide) stress. Mediates response to oxidative stress caused by paraquat (PQ) via induction of the methionine sulfoxide reductase genes, msrA and msrB. Also acts as a transcriptional activator of the bacillithiol (BSH) biosynthesis genes in response to oxidizing conditions and thio-reactive compounds. Involved in heat stress response and thermotolerance development, which results in diminished cellular protein aggregates. Plays an important adaptive role in the cell wall stress response. Participates in sulfate-dependent control of organosulfur metabolism. Negatively controls, via CymR, the expression of the organosulfur utilization operons ytmI, yxeI and ssu, and directly activates yrrT operon expression during growth in medium containing methionine as sole sulfur source. Negatively affects competence and sporulation. Inhibits biofilm formation in response to disulfide stress by repressing biofilm matrix genes. The sequence is that of Global transcriptional regulator Spx from Bacillus subtilis (strain 168).